A 354-amino-acid polypeptide reads, in one-letter code: NADH-quinone oxidoreductase subunit H (354 aa).

8 consecutive transmembrane segments (helical) span residues 22-42, 91-111, 124-144, 162-182, 203-223, 250-270, 291-311, and 326-346; these read ILIR…YLIL, YLVA…VIPF, LLYV…AGWA, VSYE…SGSL, LLSW…ISGV, GMTF…ISTM, IPGF…FIWI, and LGWK…AIWI.

This sequence belongs to the complex I subunit 1 family. In terms of assembly, NDH-1 is composed of 14 different subunits. Subunits NuoA, H, J, K, L, M, N constitute the membrane sector of the complex.

The protein localises to the cell inner membrane. It catalyses the reaction a quinone + NADH + 5 H(+)(in) = a quinol + NAD(+) + 4 H(+)(out). In terms of biological role, NDH-1 shuttles electrons from NADH, via FMN and iron-sulfur (Fe-S) centers, to quinones in the respiratory chain. The immediate electron acceptor for the enzyme in this species is believed to be ubiquinone. Couples the redox reaction to proton translocation (for every two electrons transferred, four hydrogen ions are translocated across the cytoplasmic membrane), and thus conserves the redox energy in a proton gradient. This subunit may bind ubiquinone. This chain is NADH-quinone oxidoreductase subunit H, found in Cupriavidus metallidurans (strain ATCC 43123 / DSM 2839 / NBRC 102507 / CH34) (Ralstonia metallidurans).